The following is a 316-amino-acid chain: Apolipoprotein E (316 aa).

A signal peptide spans 1–18 (MKVLWVALVVALLAGCQA). A run of 8 repeats spans residues 79-100 (VLME…GQLA), 101-122 (PMAQ…ARLG), 123-144 (SDME…AMLG), 145-166 (QSTE…KRLL), 167-188 (RDAD…EGAE), 189-210 (RSVS…SRAA), 211-232 (TLST…QKLH), and 233-254 (GRLE…QQLE). An 8 X 22 AA approximate tandem repeats region spans residues 79 to 254 (VLMEETMKEV…RLDKMRQQLE (176 aa)). Position 142 is a methionine sulfoxide (Met-142). Ser-146 carries the post-translational modification Phosphoserine. An LDL and other lipoprotein receptors binding region spans residues 157-167 (HLRKLRKRLLR). 161 to 164 (LRKR) serves as a coordination point for heparin. The tract at residues 209–289 (AATLSTQVGQ…SWFEPLVEDM (81 aa)) is lipid-binding and lipoprotein association. Thr-211 carries O-linked (GalNAc...) threonine glycosylation. 228 to 235 (RQKLHGRL) contacts heparin. Residues 265–316 (SQIRLQAEAFQARLRSWFEPLVEDMQRQWAGLVEKVQLALHLSPTSPPSENH) form a homooligomerization region. The tract at residues 277-289 (RLRSWFEPLVEDM) is specificity for association with VLDL.

The protein belongs to the apolipoprotein A1/A4/E family. As to quaternary structure, homotetramer. May interact with ABCA1; functionally associated with ABCA1 in the biogenesis of HDLs. May interact with APP/A4 amyloid-beta peptide; the interaction is extremely stable in vitro but its physiological significance is unclear. May interact with MAPT. May interact with MAP2. In the cerebrospinal fluid, interacts with secreted SORL1. Interacts with PMEL; this allows the loading of PMEL luminal fragment on ILVs to induce fibril nucleation. APOE exists as multiple glycosylated and sialylated glycoforms within cells and in plasma. The extent of glycosylation and sialylation are tissue and context specific. Post-translationally, glycated in plasma VLDL. In terms of processing, phosphorylated by FAM20C in the extracellular medium.

The protein resides in the secreted. It is found in the extracellular space. Its subcellular location is the extracellular matrix. The protein localises to the extracellular vesicle. It localises to the endosome. The protein resides in the multivesicular body. In terms of biological role, APOE is an apolipoprotein, a protein associating with lipid particles, that mainly functions in lipoprotein-mediated lipid transport between organs via the plasma and interstitial fluids. APOE is a core component of plasma lipoproteins and is involved in their production, conversion and clearance. Apolipoproteins are amphipathic molecules that interact both with lipids of the lipoprotein particle core and the aqueous environment of the plasma. As such, APOE associates with chylomicrons, chylomicron remnants, very low density lipoproteins (VLDL) and intermediate density lipoproteins (IDL) but shows a preferential binding to high-density lipoproteins (HDL). It also binds a wide range of cellular receptors including the LDL receptor/LDLR and the very low-density lipoprotein receptor/VLDLR that mediate the cellular uptake of the APOE-containing lipoprotein particles. Finally, APOE also has a heparin-binding activity and binds heparan-sulfate proteoglycans on the surface of cells, a property that supports the capture and the receptor-mediated uptake of APOE-containing lipoproteins by cells. The polypeptide is Apolipoprotein E (APOE) (Ovis aries musimon (Mouflon)).